The sequence spans 63 residues: Small ribosomal subunit protein bS21 (63 aa).

Belongs to the bacterial ribosomal protein bS21 family.

This is Small ribosomal subunit protein bS21 from Azobacteroides pseudotrichonymphae genomovar. CFP2.